The primary structure comprises 597 residues: U3 small nucleolar RNA-associated protein 6 homolog (597 aa).

HAT repeat units follow at residues 121-153 (ATKTRLSKVFSAMLAIHSNKPALWIMAAKWEME), 156-188 (LSSESARQLFLRALRFHPECPKLYKEYFRMELM), 304-335 (RKEERCCAVYEEAVKTLPTEAMWKCYITFCLE), 488-520 (GGYKKARAVFKSLQESRPFSVDFFRKMIQFEKE), and 524-557 (CNMANIREYYERALREFGSADSDLWMDYMKEELN).

The protein belongs to the UTP6 family. In terms of assembly, part of the small subunit (SSU) processome, composed of more than 70 proteins and the RNA chaperone small nucleolar RNA (snoRNA) U3.

The protein resides in the nucleus. Its subcellular location is the nucleolus. Its function is as follows. Part of the small subunit (SSU) processome, first precursor of the small eukaryotic ribosomal subunit. During the assembly of the SSU processome in the nucleolus, many ribosome biogenesis factors, an RNA chaperone and ribosomal proteins associate with the nascent pre-rRNA and work in concert to generate RNA folding, modifications, rearrangements and cleavage as well as targeted degradation of pre-ribosomal RNA by the RNA exosome. Involved in nucleolar processing of pre-18S ribosomal RNA. This Homo sapiens (Human) protein is U3 small nucleolar RNA-associated protein 6 homolog.